We begin with the raw amino-acid sequence, 109 residues long: MAAGVVFLALSAQLLQARLMKEESPVVSWRLEPEDGTALDVHFVSTLEPLSNAVKRNVPRCIIILVLQEPTPFRISVTSSCFVQNTLTKLLKDRRKMQTVQCATAQETS.

The first 17 residues, methionine 1–alanine 17, serve as a signal peptide directing secretion.

This sequence belongs to the BAGE family. In terms of tissue distribution, not expressed in normal tissues except in testis. Expressed in melanoma, bladder and lung carcinomas.

It is found in the secreted. Unknown. Candidate gene encoding tumor antigens. This is B melanoma antigen 3 (BAGE3) from Homo sapiens (Human).